The chain runs to 107 residues: EPIDERMAL PATTERNING FACTOR-like protein 3 (107 aa).

An N-terminal signal peptide occupies residues 1–24 (MEYMFLLMSKFFFVFPIIIYIGPA). Disulfide bonds link cysteine 64/cysteine 102, cysteine 68/cysteine 74, and cysteine 71/cysteine 104.

This sequence belongs to the plant cysteine rich small secretory peptide family. Epidermal patterning factor subfamily.

The protein localises to the secreted. Controls stomatal patterning. This Arabidopsis thaliana (Mouse-ear cress) protein is EPIDERMAL PATTERNING FACTOR-like protein 3.